A 359-amino-acid chain; its full sequence is MTLDSTMACCLSEEVKESKRINAEIEKQLRRDKKDSRRELKLLLLGTGESGKSTFIKQMRIIHGSGYSEEDKKGFTKLVFQNIFTAMQSMIRAMETLKILYKYEQNKANAQVVREVDVEKVCTFEQPYVNAIKNLWSDPGIQECYDRRREYQLSDSTKYYLTDVDRISKPGYLPTQQDVLRVRVPTTGIIEYPFDLENIIFRMVDVGGQRSERRKWIHCFENVTSIMFLVALSEYDQVLVESDNENRMEESKALFRTIITYPWFQNSSVILFLNKKDLLEDKIMYSHLVDYFPEFDGPQRDAATAREFILKMFVDLNPDSDKIIYSHFTCATDTENIRFVFAAVKDTILQHNLKEYNLV.

2 S-palmitoyl cysteine lipidation sites follow: cysteine 9 and cysteine 10. One can recognise a G-alpha domain in the interval 38–359 (RELKLLLLGT…QHNLKEYNLV (322 aa)). The G1 motif stretch occupies residues 41–54 (KLLLLGTGESGKST). GTP contacts are provided by residues 46–53 (GTGESGKS) and 180–183 (LRVR). Serine 53 provides a ligand contact to Mg(2+). The tract at residues 178–186 (DVLRVRVPT) is G2 motif. Threonine 186 lines the Mg(2+) pocket. The tract at residues 201–210 (FRMVDVGGQR) is G3 motif. Residues 270-277 (ILFLNKKD) are G4 motif. GTP contacts are provided by residues 274–277 (NKKD) and alanine 331. The tract at residues 329 to 334 (TCATDT) is G5 motif.

Belongs to the G-alpha family. G(q) subfamily. In terms of assembly, g proteins are composed of 3 units; alpha, beta and gamma. The alpha chain contains the guanine nucleotide binding site.

The protein localises to the cell membrane. It is found in the cytoplasm. It catalyses the reaction GTP + H2O = GDP + phosphate + H(+). Guanine nucleotide-binding proteins (G proteins) function as transducers downstream of G protein-coupled receptors (GPCRs) in numerous signaling cascades. The alpha chain contains the guanine nucleotide binding site and alternates between an active, GTP-bound state and an inactive, GDP-bound state. Signaling by an activated GPCR promotes GDP release and GTP binding. The alpha subunit has a low GTPase activity that converts bound GTP to GDP, thereby terminating the signal. Both GDP release and GTP hydrolysis are modulated by numerous regulatory proteins. Signaling is mediated via phospholipase C-beta-dependent inositol lipid hydrolysis for signal propagation: activates phospholipase C-beta: following GPCR activation, GNA11 activates PLC-beta (PLCB1, PLCB2, PLCB3 or PLCB4), leading to production of diacylglycerol (DAG) and inositol 1,4,5-trisphosphate (IP3). The chain is Guanine nucleotide-binding protein subunit alpha-11 (gna11) from Xenopus laevis (African clawed frog).